A 181-amino-acid polypeptide reads, in one-letter code: Peptide deformylase (181 aa).

Fe cation-binding residues include C103 and H145. E146 is a catalytic residue. H149 lines the Fe cation pocket.

The protein belongs to the polypeptide deformylase family. Fe(2+) is required as a cofactor.

It carries out the reaction N-terminal N-formyl-L-methionyl-[peptide] + H2O = N-terminal L-methionyl-[peptide] + formate. Its function is as follows. Removes the formyl group from the N-terminal Met of newly synthesized proteins. Requires at least a dipeptide for an efficient rate of reaction. N-terminal L-methionine is a prerequisite for activity but the enzyme has broad specificity at other positions. This chain is Peptide deformylase, found in Orientia tsutsugamushi (strain Boryong) (Rickettsia tsutsugamushi).